The following is a 226-amino-acid chain: 7-cyano-7-deazaguanine synthase (226 aa).

Isoleucine 8–leucine 18 lines the ATP pocket. Positions 188, 198, 201, and 204 each coordinate Zn(2+).

The protein belongs to the QueC family. Requires Zn(2+) as cofactor.

It carries out the reaction 7-carboxy-7-deazaguanine + NH4(+) + ATP = 7-cyano-7-deazaguanine + ADP + phosphate + H2O + H(+). It participates in purine metabolism; 7-cyano-7-deazaguanine biosynthesis. Its function is as follows. Catalyzes the ATP-dependent conversion of 7-carboxy-7-deazaguanine (CDG) to 7-cyano-7-deazaguanine (preQ(0)). The protein is 7-cyano-7-deazaguanine synthase of Coxiella burnetii (strain RSA 493 / Nine Mile phase I).